The following is a 132-amino-acid chain: Small ribosomal subunit protein uS8 (132 aa).

This sequence belongs to the universal ribosomal protein uS8 family. In terms of assembly, part of the 30S ribosomal subunit. Contacts proteins S5 and S12.

In terms of biological role, one of the primary rRNA binding proteins, it binds directly to 16S rRNA central domain where it helps coordinate assembly of the platform of the 30S subunit. This is Small ribosomal subunit protein uS8 from Borrelia hermsii (strain HS1 / DAH).